A 429-amino-acid chain; its full sequence is Phosphoribosylamine--glycine ligase (429 aa).

In terms of domain architecture, ATP-grasp spans 109-316; the sequence is KDFLARHQIP…LVELCLAAID (208 aa). 135 to 196 lines the ATP pocket; it reads VREQGAPIVV…EEFLDGEEAS (62 aa). The interval 212-234 is disordered; that stretch reads SQDHKRVGDKDTGPNTGGMGAYS. Residues 213 to 223 are compositionally biased toward basic and acidic residues; sequence QDHKRVGDKDT. Glutamate 286 and asparagine 288 together coordinate Mg(2+).

Belongs to the GARS family. It depends on Mg(2+) as a cofactor. Requires Mn(2+) as cofactor.

The catalysed reaction is 5-phospho-beta-D-ribosylamine + glycine + ATP = N(1)-(5-phospho-beta-D-ribosyl)glycinamide + ADP + phosphate + H(+). It functions in the pathway purine metabolism; IMP biosynthesis via de novo pathway; N(1)-(5-phospho-D-ribosyl)glycinamide from 5-phospho-alpha-D-ribose 1-diphosphate: step 2/2. The sequence is that of Phosphoribosylamine--glycine ligase from Vibrio vulnificus (strain YJ016).